The following is a 350-amino-acid chain: MVTPCPTSPSSPAARAGRRDNDQNLRAPVKKSRRPRLRRKQPLHPLNPCPLPGDSGICDLFESPSSGSDGAESPSAARGGSPLPGPAQPVAQLDLQTFRDYGQSCYAFRKAQESHFHPREALARQPQVTAESRCKLLSWLIPVHRQFGLSFESLCLTVNTLDRFLTTTPVAADCFQLLGVTSLLIACKQVEVHPPRVKQLLALCCGAFSRQQLCNLECIVLHKLHFTLGAPTISFFLEHFTHARVEAGQAEASEALEAQALARGVAELSLADYAFTSYSPSLLAICCLALADRMLRVSRPVDLRLGDHPEAALEDCMGKLQLLVAINSTSLTHMLPVQICEKCSLPPSSK.

The segment at 1-89 (MVTPCPTSPS…GSPLPGPAQP (89 aa)) is disordered. Positions 28–42 (PVKKSRRPRLRRKQP) are enriched in basic residues. At S81 the chain carries Phosphoserine.

It belongs to the cyclin family. As to expression, present in respiratory cells (at protein level).

It is found in the cytoplasm. The protein localises to the nucleus. Its subcellular location is the nucleolus. Its function is as follows. Specifically required for generation of multiciliated cells, possibly by promoting a cell cycle state compatible with centriole amplification and maturation. Acts downstream of MCIDAS to promote mother centriole amplification and maturation in preparation for apical docking. The polypeptide is Cyclin-O (Homo sapiens (Human)).